The following is a 527-amino-acid chain: BTB/POZ domain-containing protein At4g01160 (527 aa).

In terms of domain architecture, BTB spans 111–180 (NNNTSVLSVQ…MYSNSLSVTA (70 aa)). Residues 233–327 (VKPLTNAARQ…HMTTDRLKKI (95 aa)) enclose the BACK domain.

Its pathway is protein modification; protein ubiquitination. In terms of biological role, may act as a substrate-specific adapter of an E3 ubiquitin-protein ligase complex (CUL3-RBX1-BTB) which mediates the ubiquitination and subsequent proteasomal degradation of target proteins. The polypeptide is BTB/POZ domain-containing protein At4g01160 (Arabidopsis thaliana (Mouse-ear cress)).